The chain runs to 226 residues: CRISPR-associated protein Cas5 (226 aa).

The protein belongs to the CRISPR-associated protein Cas5 family. Subtype I-A/Apern subfamily. As to quaternary structure, can form a Cascade complex with Csa5, Cas7, Cas3, Cas3' and Cas8a2.

In terms of biological role, CRISPR (clustered regularly interspaced short palindromic repeat) is an adaptive immune system that provides protection against mobile genetic elements (viruses, transposable elements and conjugative plasmids). CRISPR clusters contain spacers, sequences complementary to antecedent mobile elements, and target invading nucleic acids. CRISPR clusters are transcribed and processed into CRISPR RNA (crRNA). The polypeptide is CRISPR-associated protein Cas5 (cas5a) (Thermoproteus tenax (strain ATCC 35583 / DSM 2078 / JCM 9277 / NBRC 100435 / Kra 1)).